The chain runs to 479 residues: UDP-N-acetylmuramoylalanine--D-glutamate ligase (479 aa).

110-116 is an ATP binding site; it reads GTNGKTS.

It belongs to the MurCDEF family.

It is found in the cytoplasm. It carries out the reaction UDP-N-acetyl-alpha-D-muramoyl-L-alanine + D-glutamate + ATP = UDP-N-acetyl-alpha-D-muramoyl-L-alanyl-D-glutamate + ADP + phosphate + H(+). It functions in the pathway cell wall biogenesis; peptidoglycan biosynthesis. Its function is as follows. Cell wall formation. Catalyzes the addition of glutamate to the nucleotide precursor UDP-N-acetylmuramoyl-L-alanine (UMA). In Bifidobacterium adolescentis (strain ATCC 15703 / DSM 20083 / NCTC 11814 / E194a), this protein is UDP-N-acetylmuramoylalanine--D-glutamate ligase.